The sequence spans 88 residues: Small ribosomal subunit protein uS15 (88 aa).

It belongs to the universal ribosomal protein uS15 family. In terms of assembly, part of the 30S ribosomal subunit. Forms a bridge to the 50S subunit in the 70S ribosome, contacting the 23S rRNA.

In terms of biological role, one of the primary rRNA binding proteins, it binds directly to 16S rRNA where it helps nucleate assembly of the platform of the 30S subunit by binding and bridging several RNA helices of the 16S rRNA. Its function is as follows. Forms an intersubunit bridge (bridge B4) with the 23S rRNA of the 50S subunit in the ribosome. This Mesoplasma florum (strain ATCC 33453 / NBRC 100688 / NCTC 11704 / L1) (Acholeplasma florum) protein is Small ribosomal subunit protein uS15.